The chain runs to 678 residues: Probable 3',5'-cyclic phosphodiesterase pde-3 (678 aa).

Disordered regions lie at residues 1-27, 52-95, and 223-250; these read MSPG…FQPT, AEMR…VLGG, and TVPA…NEHE. The span at 7-19 shows a compositional bias: low complexity; that stretch reads AVGGVSPPVMVPG. Polar residues-rich tracts occupy residues 60 to 85 and 231 to 246; these read TATS…NSGV and ARSS…PSNN. The PDEase domain occupies 281-632; it reads RYDTRELDTD…RKWKEQIELE (352 aa). Histidine 356 functions as the Proton donor in the catalytic mechanism. A divalent metal cation-binding residues include histidine 360, histidine 421, aspartate 422, and aspartate 531. Residues 654–678 are disordered; sequence EEESASTSDSPDPRRDSPLDSDLSQ.

It belongs to the cyclic nucleotide phosphodiesterase family. The cofactor is a divalent metal cation.

It carries out the reaction a nucleoside 3',5'-cyclic phosphate + H2O = a nucleoside 5'-phosphate + H(+). The chain is Probable 3',5'-cyclic phosphodiesterase pde-3 (pde-3) from Caenorhabditis elegans.